Reading from the N-terminus, the 243-residue chain is Transmembrane protein 174 (243 aa).

A run of 2 helical transmembrane segments spans residues 40 to 60 (LLFS…MGWI) and 73 to 93 (LLGP…VCKF). Positions 205–229 (AGHDRPSSDADQLEGTQMGEEERVC) are disordered.

Interacts with SLC34A1; regulates SLC34A1 internalization by PTH and FGF23.

It localises to the endoplasmic reticulum membrane. The protein localises to the apical cell membrane. Its function is as follows. Regulator of plasma phosphate homeostasis. Decreases serum inorganic phosphate (Pi) uptake by regulating the sodium-phosphate cotransporter SLC34A1 trafficking by PTH and FGF23 in the kidney. This chain is Transmembrane protein 174 (Tmem174), found in Rattus norvegicus (Rat).